Consider the following 116-residue polypeptide: Large ribosomal subunit protein uL24c (116 aa).

It belongs to the universal ribosomal protein uL24 family. In terms of assembly, part of the 50S ribosomal subunit.

The protein localises to the plastid. The protein resides in the chloroplast. One of two assembly initiator proteins, it binds directly to the 5'-end of the 23S rRNA, where it nucleates assembly of the 50S subunit. The polypeptide is Large ribosomal subunit protein uL24c (rpl24) (Pyropia yezoensis (Susabi-nori)).